Consider the following 511-residue polypeptide: Lysine--tRNA ligase (511 aa).

Mg(2+)-binding residues include E421 and E428.

This sequence belongs to the class-II aminoacyl-tRNA synthetase family. As to quaternary structure, homodimer. The cofactor is Mg(2+).

It is found in the cytoplasm. The enzyme catalyses tRNA(Lys) + L-lysine + ATP = L-lysyl-tRNA(Lys) + AMP + diphosphate. The protein is Lysine--tRNA ligase of Aeromonas hydrophila subsp. hydrophila (strain ATCC 7966 / DSM 30187 / BCRC 13018 / CCUG 14551 / JCM 1027 / KCTC 2358 / NCIMB 9240 / NCTC 8049).